Reading from the N-terminus, the 258-residue chain is Thiazole synthase (258 aa).

The Schiff-base intermediate with DXP role is filled by lysine 98. 1-deoxy-D-xylulose 5-phosphate-binding positions include glycine 159, 185-186 (AG), and 207-208 (NT).

The protein belongs to the ThiG family. Homotetramer. Forms heterodimers with either ThiH or ThiS.

The protein resides in the cytoplasm. It catalyses the reaction [ThiS sulfur-carrier protein]-C-terminal-Gly-aminoethanethioate + 2-iminoacetate + 1-deoxy-D-xylulose 5-phosphate = [ThiS sulfur-carrier protein]-C-terminal Gly-Gly + 2-[(2R,5Z)-2-carboxy-4-methylthiazol-5(2H)-ylidene]ethyl phosphate + 2 H2O + H(+). It functions in the pathway cofactor biosynthesis; thiamine diphosphate biosynthesis. Its function is as follows. Catalyzes the rearrangement of 1-deoxy-D-xylulose 5-phosphate (DXP) to produce the thiazole phosphate moiety of thiamine. Sulfur is provided by the thiocarboxylate moiety of the carrier protein ThiS. In vitro, sulfur can be provided by H(2)S. The chain is Thiazole synthase from Bacillus thuringiensis subsp. konkukian (strain 97-27).